A 921-amino-acid chain; its full sequence is Isoleucine--tRNA ligase (921 aa).

A 'HIGH' region motif is present at residues 57 to 67 (PYANGELHMGH). Glu-552 provides a ligand contact to L-isoleucyl-5'-AMP. Positions 593–597 (KMSKS) match the 'KMSKS' region motif. Lys-596 provides a ligand contact to ATP. The Zn(2+) site is built by Cys-888, Cys-891, Cys-908, and Cys-911.

Belongs to the class-I aminoacyl-tRNA synthetase family. IleS type 1 subfamily. As to quaternary structure, monomer. Requires Zn(2+) as cofactor.

The protein resides in the cytoplasm. It carries out the reaction tRNA(Ile) + L-isoleucine + ATP = L-isoleucyl-tRNA(Ile) + AMP + diphosphate. Its function is as follows. Catalyzes the attachment of isoleucine to tRNA(Ile). As IleRS can inadvertently accommodate and process structurally similar amino acids such as valine, to avoid such errors it has two additional distinct tRNA(Ile)-dependent editing activities. One activity is designated as 'pretransfer' editing and involves the hydrolysis of activated Val-AMP. The other activity is designated 'posttransfer' editing and involves deacylation of mischarged Val-tRNA(Ile). This is Isoleucine--tRNA ligase from Listeria innocua serovar 6a (strain ATCC BAA-680 / CLIP 11262).